Here is a 140-residue protein sequence, read N- to C-terminus: ATP synthase epsilon chain (140 aa).

The protein belongs to the ATPase epsilon chain family. In terms of assembly, F-type ATPases have 2 components, CF(1) - the catalytic core - and CF(0) - the membrane proton channel. CF(1) has five subunits: alpha(3), beta(3), gamma(1), delta(1), epsilon(1). CF(0) has three main subunits: a, b and c.

It is found in the cell inner membrane. Its function is as follows. Produces ATP from ADP in the presence of a proton gradient across the membrane. This Colwellia psychrerythraea (strain 34H / ATCC BAA-681) (Vibrio psychroerythus) protein is ATP synthase epsilon chain.